The primary structure comprises 439 residues: Serine/threonine-protein kinase 2 (439 aa).

Residues 87–439 (NDDFYHISTG…IFSDWINGGN (353 aa)) form the Protein kinase domain. ATP contacts are provided by residues 93-101 (ISTGGYGIV) and Lys-117. Asp-307 functions as the Proton acceptor in the catalytic mechanism.

Belongs to the protein kinase superfamily. Ser/Thr protein kinase family. Post-translationally, phosphorylated in vivo. Autophosphorylated in vitro.

It is found in the host endoplasmic reticulum. The protein localises to the host endoplasmic reticulum-Golgi intermediate compartment. It catalyses the reaction L-seryl-[protein] + ATP = O-phospho-L-seryl-[protein] + ADP + H(+). The catalysed reaction is L-threonyl-[protein] + ATP = O-phospho-L-threonyl-[protein] + ADP + H(+). Essential serine-protein kinase involved in the early stage of virion morphogenesis. In Bos taurus (Bovine), this protein is Serine/threonine-protein kinase 2 (OPG054).